We begin with the raw amino-acid sequence, 412 residues long: Class E basic helix-loop-helix protein 40 (412 aa).

An essential for interaction with BMAL1, E-box binding and repressor activity against the CLOCK-BMAL1 heterodimer region spans residues 1-139 (MERIPSAQPP…LSGRNVETGQ (139 aa)). The region spanning 52–107 (TYKLPHRLIEKKRRDRINECIAQLKDLLPEHLKLTTLGHLEKAVVLELTLKHVKAL) is the bHLH domain. The necessary for interaction with RXRA and repressor activity against RXRA stretch occupies residues 75–79 (LKDLL). Positions 142–175 (FCSGFQTCAREVLQYLAKHENTRDLKSSQLVTHL) constitute an Orange domain. Residue Lys-159 forms a Glycyl lysine isopeptide (Lys-Gly) (interchain with G-Cter in SUMO1, SUMO2 and SUMO3) linkage. Lys-167 is covalently cross-linked (Glycyl lysine isopeptide (Lys-Gly) (interchain with G-Cter in SUMO2)). A disordered region spans residues 182–303 (LLQGGTSRKP…LSDDEGHFTS (122 aa)). At Ser-235 the chain carries Phosphoserine. Basic and acidic residues predominate over residues 248–271 (ESEKGDLRSEQPCFKSDHGRRFTM). Lys-279 participates in a covalent cross-link: Glycyl lysine isopeptide (Lys-Gly) (interchain with G-Cter in SUMO1); alternate. Lys-279 participates in a covalent cross-link: Glycyl lysine isopeptide (Lys-Gly) (interchain with G-Cter in SUMO1, SUMO2 and SUMO3); alternate. Lys-279 participates in a covalent cross-link: Glycyl lysine isopeptide (Lys-Gly) (interchain with G-Cter in SUMO2); alternate. Residue Lys-288 forms a Glycyl lysine isopeptide (Lys-Gly) (interchain with G-Cter in SUMO2) linkage. Ser-383 is subject to Phosphoserine.

In terms of assembly, homodimer. Heterodimer with BHLHE41/DEC2. Interacts with TCF3/E47. Interacts with ubiquitin-conjugating enzyme UBE2I/UBC9. Interacts with HDAC1, SUMO1, RXRA and BMAL1. In terms of processing, ubiquitinated; which may lead to proteasomal degradation. Post-translationally, sumoylation inhibits its ubiquitination and promotes its negative regulation of the CLOCK-BMAL1 heterodimer transcriptional activator activity. As to expression, expressed in cartilage, spleen, intestine, lung, and to a lesser extent in heart, brain, liver, muscle and stomach.

It localises to the cytoplasm. It is found in the nucleus. In terms of biological role, transcriptional repressor involved in the regulation of the circadian rhythm by negatively regulating the activity of the clock genes and clock-controlled genes. Acts as the negative limb of a novel autoregulatory feedback loop (DEC loop) which differs from the one formed by the PER and CRY transcriptional repressors (PER/CRY loop). Both these loops are interlocked as it represses the expression of PER1/2 and in turn is repressed by PER1/2 and CRY1/2. Represses the activity of the circadian transcriptional activator: CLOCK-BMAL1|BMAL2 heterodimer by competing for the binding to E-box elements (5'-CACGTG-3') found within the promoters of its target genes. Negatively regulates its own expression and the expression of DBP and BHLHE41/DEC2. Acts as a corepressor of RXR and the RXR-LXR heterodimers and represses the ligand-induced RXRA and NR1H3/LXRA transactivation activity. May be involved in the regulation of chondrocyte differentiation via the cAMP pathway. Represses the transcription of NR0B2 and attentuates the transactivation of NR0B2 by the CLOCK-BMAL1 complex. Drives the circadian rhythm of blood pressure through transcriptional repression of ATP1B1 in the cardiovascular system. The sequence is that of Class E basic helix-loop-helix protein 40 (BHLHE40) from Homo sapiens (Human).